The chain runs to 144 residues: Peptide methionine sulfoxide reductase MsrB (144 aa).

The 123-residue stretch at 6-128 (KDELKKKLTP…NSAALRFIPK (123 aa)) folds into the MsrB domain. The active-site Nucleophile is the Cys-117.

It belongs to the MsrB Met sulfoxide reductase family.

It catalyses the reaction L-methionyl-[protein] + [thioredoxin]-disulfide + H2O = L-methionyl-(R)-S-oxide-[protein] + [thioredoxin]-dithiol. This chain is Peptide methionine sulfoxide reductase MsrB, found in Shouchella clausii (strain KSM-K16) (Alkalihalobacillus clausii).